A 207-amino-acid chain; its full sequence is Dephospho-CoA kinase (207 aa).

In terms of domain architecture, DPCK spans 10 to 207; the sequence is ILGLTGGIGS…FYLTLKGGQP (198 aa). 18–23 contributes to the ATP binding site; that stretch reads GSGKSA.

The protein belongs to the CoaE family.

It is found in the cytoplasm. It carries out the reaction 3'-dephospho-CoA + ATP = ADP + CoA + H(+). It participates in cofactor biosynthesis; coenzyme A biosynthesis; CoA from (R)-pantothenate: step 5/5. Its function is as follows. Catalyzes the phosphorylation of the 3'-hydroxyl group of dephosphocoenzyme A to form coenzyme A. The polypeptide is Dephospho-CoA kinase (Pseudomonas putida (strain ATCC 47054 / DSM 6125 / CFBP 8728 / NCIMB 11950 / KT2440)).